Consider the following 510-residue polypeptide: NAD(P)H-quinone oxidoreductase subunit 2, chloroplastic (510 aa).

Transmembrane regions (helical) follow at residues 26 to 46, 57 to 77, 99 to 119, 124 to 144, 149 to 169, 184 to 204, 227 to 247, 295 to 315, 323 to 343, 354 to 374, 395 to 415, 418 to 438, and 484 to 504; these read LFDG…ILLL, IPWL…ALLF, IFQV…VEYI, MAIT…MFLC, LITI…LSGY, LLMG…LYGL, PGIS…LSPA, WHLL…LIAI, MLAY…IVGD, YMLF…LFGL, ALSL…AGFF, LYLF…IALV, and MIVC…IIAI.

The protein belongs to the complex I subunit 2 family. In terms of assembly, NDH is composed of at least 16 different subunits, 5 of which are encoded in the nucleus.

Its subcellular location is the plastid. It localises to the chloroplast thylakoid membrane. The enzyme catalyses a plastoquinone + NADH + (n+1) H(+)(in) = a plastoquinol + NAD(+) + n H(+)(out). It carries out the reaction a plastoquinone + NADPH + (n+1) H(+)(in) = a plastoquinol + NADP(+) + n H(+)(out). NDH shuttles electrons from NAD(P)H:plastoquinone, via FMN and iron-sulfur (Fe-S) centers, to quinones in the photosynthetic chain and possibly in a chloroplast respiratory chain. The immediate electron acceptor for the enzyme in this species is believed to be plastoquinone. Couples the redox reaction to proton translocation, and thus conserves the redox energy in a proton gradient. The sequence is that of NAD(P)H-quinone oxidoreductase subunit 2, chloroplastic from Trachelium caeruleum (Blue throatwort).